The chain runs to 814 residues: Rho GTPase-activating protein 44 (814 aa).

One can recognise a BAR domain in the interval 14-249; sequence QTVGRAEKTE…IKAQQEAWVE (236 aa). The 191-residue stretch at 255–445 folds into the Rho-GAP domain; that stretch reads KPLEEHLMIS…PIIQHADWFF (191 aa). 3 disordered regions span residues 467–493, 531–768, and 784–814; these read ANYS…RPLS, SAGR…SMST, and STLR…STAL. The segment covering 479–489 has biased composition (basic and acidic residues); it reads PADRRQPEQAR. Serine 493 bears the Phosphoserine mark. Composition is skewed to low complexity over residues 531 to 541, 567 to 581, 598 to 612, 622 to 637, 684 to 704, and 741 to 752; these read SAGRKAACAPP, SPAT…SGAS, SPGS…SIQG, PQPA…DQSP, SPYG…LSPA, and SVSLSASSPQST. An interaction with BST2 region spans residues 727–814; it reads KPRQRPTLPP…SEEESESTAL (88 aa). Residues 790-805 show a composition bias toward basic and acidic residues; that stretch reads PLEHARRHSVTDKRDS. Serine 805 is subject to Phosphoserine. The PDZ-binding motif lies at 811 to 814; that stretch reads STAL.

In terms of assembly, interacts with BST2 (via cytoplasmic domain). Interacts (probably via PDZ-binding motif) with SHANK3 (via PDZ domain); the interaction takes place in dendritic spines and promotes GRIA1 exocytosis. In terms of tissue distribution, expressed in brain, detected at high levels in hippocampal CA1 (at protein level).

The protein localises to the cell projection. Its subcellular location is the dendritic spine. The protein resides in the recycling endosome. It localises to the presynapse. It is found in the dendrite. Its function is as follows. GTPase-activating protein (GAP) that stimulates the GTPase activity of Rho-type GTPases. Thereby, controls Rho-type GTPases cycling between their active GTP-bound and inactive GDP-bound states. Acts as a GAP at least for CDC42 and RAC1. In neurons, is involved in dendritic spine formation and synaptic plasticity in a specific RAC1-GAP activity. Limits the initiation of exploratory dendritic filopodia. Recruited to actin-patches that seed filopodia, binds specifically to plasma membrane sections that are deformed inward by acto-myosin mediated contractile forces. Acts through GAP activity on RAC1 to reduce actin polymerization necessary for filopodia formation. In association with SHANK3, promotes GRIA1 exocytosis from recycling endosomes and spine morphological changes associated to long-term potentiation. In Rattus norvegicus (Rat), this protein is Rho GTPase-activating protein 44.